The sequence spans 359 residues: Putative B3 domain-containing protein At3g24850 (359 aa).

2 disordered regions span residues 92 to 111 and 159 to 192; these read DSEIEDPQTSDSQMKTLQNS and EKMETKDPPNPLSLCLTGNTSRKRRAVEERKRTG. Positions 100–111 are enriched in polar residues; the sequence is TSDSQMKTLQNS. Positions 250-351 form a DNA-binding region, TF-B3; it reads FNNLLQNDFL…VLCFAMEQSS (102 aa).

The protein localises to the nucleus. The protein is Putative B3 domain-containing protein At3g24850 of Arabidopsis thaliana (Mouse-ear cress).